We begin with the raw amino-acid sequence, 294 residues long: Probable enoyl-CoA hydratase echA12 (294 aa).

The protein belongs to the enoyl-CoA hydratase/isomerase family.

It carries out the reaction a (3S)-3-hydroxyacyl-CoA = a (2E)-enoyl-CoA + H2O. It catalyses the reaction a 4-saturated-(3S)-3-hydroxyacyl-CoA = a (3E)-enoyl-CoA + H2O. In terms of biological role, could possibly oxidize fatty acids using specific components. The protein is Probable enoyl-CoA hydratase echA12 (echA12) of Mycobacterium leprae (strain TN).